A 149-amino-acid polypeptide reads, in one-letter code: Alpha-crystallin A chain (149 aa).

The region spanning 41 to 149 (LFRTVLESGI…DTSYSERPIP (109 aa)) is the sHSP domain. Residues His-89, Glu-91, and His-96 each contribute to the Zn(2+) site.

This sequence belongs to the small heat shock protein (HSP20) family. Heteropolymer composed of three CRYAA and one CRYAB subunits. Inter-subunit bridging via zinc ions enhances stability, which is crucial as there is no protein turn over in the lens. Zinc coordination is achieved at least by His-89, Glu-91 and His-96. His-83 and Glu-85 come from the same molecule within the oligomer, while His-90 residue is provided by another molecule. Can also form homodimers and homotetramers (dimers of dimers) which serve as the building blocks of homooligomers.

It is found in the cytoplasm. It localises to the nucleus. In terms of biological role, contributes to the transparency and refractive index of the lens. May act as a chaperone, preventing aggregation of various proteins under a wide range of stress conditions. The chain is Alpha-crystallin A chain (CRYAA) from Trachemys scripta elegans (Red-eared slider turtle).